Reading from the N-terminus, the 99-residue chain is Orphan antixoxin protein TacA (99 aa).

This sequence belongs to the TacA antitoxin family.

Its function is as follows. Putative antitoxin component of a toxin-antitoxin (TA) system; its cognate toxin (usually a tRNA acetylase) is unknown. The sequence is that of Orphan antixoxin protein TacA from Haemophilus influenzae (strain ATCC 51907 / DSM 11121 / KW20 / Rd).